Here is a 138-residue protein sequence, read N- to C-terminus: DNA-directed RNA polymerase subunit omega (138 aa).

The tract at residues 101 to 138 (AEDDDTLEADGLTIHDGADSDLDLSDDAGQDTDEADED) is disordered. The segment covering 119 to 138 (DSDLDLSDDAGQDTDEADED) has biased composition (acidic residues).

This sequence belongs to the RNA polymerase subunit omega family. As to quaternary structure, the RNAP catalytic core consists of 2 alpha, 1 beta, 1 beta' and 1 omega subunit. When a sigma factor is associated with the core the holoenzyme is formed, which can initiate transcription.

The catalysed reaction is RNA(n) + a ribonucleoside 5'-triphosphate = RNA(n+1) + diphosphate. Promotes RNA polymerase assembly. Latches the N- and C-terminal regions of the beta' subunit thereby facilitating its interaction with the beta and alpha subunits. This is DNA-directed RNA polymerase subunit omega from Rhodospirillum rubrum (strain ATCC 11170 / ATH 1.1.1 / DSM 467 / LMG 4362 / NCIMB 8255 / S1).